A 514-amino-acid polypeptide reads, in one-letter code: MFQFHLEVLLPYLLPLLLLILPTTIFFLTKPNNKVSSTSTNNNIITLPKSYPLIGSYLSFRKNLHRRIQWLSDIVQISPSATFQLDGTLGKRQIITGNPSTVQHILKNQFSNYQKGTTFTNTLSDFLGTGIFNTNGPNWKFQRQVASHEFNTKSIRNFVEHIVDTELTNRLIPILTSSTQTNNILDFQDILQRFTFDNICNIAFGYDPEYLTPSTNRSKFAEAYEDATEISSKRFRLPLPIIWKIKKYFNIGSEKRLKEAVTEVRSFAKKLVREKKRELEEKSSLETEDMLSRFLSSGHSDEDFVADIVISFILAGKDTTSAALTWFFWLLWKNPRVEEEIVNELSKKSELMVYDEVKEMVYTHAALSESMRLYPPVPMDSKEAVNDDVLPDGWVVKKGTIVTYHVYAMGRMKSLWGDDWAEFRPERWLEKDEVNGKWVFVGRDSYSYPVFQAGPRVCLGKEMAFMQMKRIVAGIVGKFKVVPEAHLAQEPGFISFLSSQMEGGFPVTIQKRDS.

A helical membrane pass occupies residues 7–29 (EVLLPYLLPLLLLILPTTIFFLT). Residue cysteine 458 participates in heme binding.

The protein belongs to the cytochrome P450 family. Heme is required as a cofactor.

It localises to the endoplasmic reticulum membrane. Its function is as follows. Catalyzes the omega-hydroxylation of various fatty acids (FA) from 10 to 18 carbon atoms. The substrate specificity is higher for laurate &gt; palmitate &gt; myristate &gt; linolenate &gt; linoleate &gt; oleate &gt; caprate. May play a minor role in cutin synthesis and could be involved in plant defense. This chain is Cytochrome P450 94A1 (CYP94A1), found in Vicia sativa (Spring vetch).